A 361-amino-acid chain; its full sequence is Trans-2,3-enoyl-CoA reductase-like (361 aa).

Residues S33 and S35 each carry the phosphoserine modification. 4 consecutive transmembrane segments (helical) span residues 139–159 (VGWTTVFLAEYSGPLLIYLLF), 181–201 (VHLAFFCHCIHYIRLLLETLF), 215–235 (LIKGCAFYWGFTSWMAYYINH), and 309–329 (ISFTVMTQTLPVGIFTILMTI).

It belongs to the steroid 5-alpha reductase family. In terms of tissue distribution, expression is highest in the heart with very low to almost undetectable levels in brain, skeletal muscle, stomach, pancreas, liver, kidney, small intestine, and uterus.

The protein resides in the membrane. It localises to the endoplasmic reticulum. The polypeptide is Trans-2,3-enoyl-CoA reductase-like (Tecrl) (Mus musculus (Mouse)).